Reading from the N-terminus, the 475-residue chain is Ribulose bisphosphate carboxylase large chain (475 aa).

A propeptide spanning residues 1-2 (MS) is cleaved from the precursor. Pro-3 bears the N-acetylproline mark. Lys-14 is modified (N6,N6,N6-trimethyllysine). Substrate is bound by residues Asn-123 and Thr-173. Catalysis depends on Lys-175, which acts as the Proton acceptor. Lys-177 lines the substrate pocket. Mg(2+)-binding residues include Lys-201, Asp-203, and Glu-204. Lys-201 carries the post-translational modification N6-carboxylysine. Catalysis depends on His-294, which acts as the Proton acceptor. Substrate is bound by residues Arg-295, His-327, and Ser-379.

It belongs to the RuBisCO large chain family. Type I subfamily. In terms of assembly, heterohexadecamer of 8 large chains and 8 small chains; disulfide-linked. The disulfide link is formed within the large subunit homodimers. The cofactor is Mg(2+). In terms of processing, the disulfide bond which can form in the large chain dimeric partners within the hexadecamer appears to be associated with oxidative stress and protein turnover.

Its subcellular location is the plastid. It is found in the chloroplast. The catalysed reaction is 2 (2R)-3-phosphoglycerate + 2 H(+) = D-ribulose 1,5-bisphosphate + CO2 + H2O. It carries out the reaction D-ribulose 1,5-bisphosphate + O2 = 2-phosphoglycolate + (2R)-3-phosphoglycerate + 2 H(+). Its function is as follows. RuBisCO catalyzes two reactions: the carboxylation of D-ribulose 1,5-bisphosphate, the primary event in carbon dioxide fixation, as well as the oxidative fragmentation of the pentose substrate in the photorespiration process. Both reactions occur simultaneously and in competition at the same active site. In Alnus incana (White alder), this protein is Ribulose bisphosphate carboxylase large chain.